The primary structure comprises 430 residues: Adenylosuccinate synthetase (430 aa).

Residues 12 to 18 (GDEGKGK) and 40 to 42 (GHT) contribute to the GTP site. The active-site Proton acceptor is the aspartate 13. The Mg(2+) site is built by aspartate 13 and glycine 40. Residues 13-16 (DEGK), 38-41 (NAGH), threonine 130, arginine 144, glutamine 225, threonine 240, and arginine 304 each bind IMP. Histidine 41 functions as the Proton donor in the catalytic mechanism. A substrate-binding site is contributed by 300–306 (ATTGRPR). Residues arginine 306, 332–334 (KLD), and 414–416 (SIG) contribute to the GTP site.

Belongs to the adenylosuccinate synthetase family. As to quaternary structure, homodimer. Requires Mg(2+) as cofactor.

It is found in the cytoplasm. It carries out the reaction IMP + L-aspartate + GTP = N(6)-(1,2-dicarboxyethyl)-AMP + GDP + phosphate + 2 H(+). The protein operates within purine metabolism; AMP biosynthesis via de novo pathway; AMP from IMP: step 1/2. In terms of biological role, plays an important role in the de novo pathway of purine nucleotide biosynthesis. Catalyzes the first committed step in the biosynthesis of AMP from IMP. The polypeptide is Adenylosuccinate synthetase (Geobacter metallireducens (strain ATCC 53774 / DSM 7210 / GS-15)).